The primary structure comprises 63 residues: Cysteine-rich peptide clone 2 (63 aa).

Residues 1–23 (MHFSGVVLILLSMTLVNFVFVET) form the signal peptide. Cystine bridges form between cysteine 33–cysteine 53, cysteine 38–cysteine 58, and cysteine 42–cysteine 60.

Expressed by the venom gland.

It is found in the secreted. This is Cysteine-rich peptide clone 2 from Tityus costatus (Brazilian scorpion).